We begin with the raw amino-acid sequence, 345 residues long: tRNA N6-adenosine threonylcarbamoyltransferase (345 aa).

The Fe cation site is built by His-111 and His-115. Residues 134–138 (LVSGG), Asp-167, Gly-180, and Asn-276 contribute to the substrate site. A Fe cation-binding site is contributed by Asp-304.

This sequence belongs to the KAE1 / TsaD family. Fe(2+) is required as a cofactor.

Its subcellular location is the cytoplasm. The enzyme catalyses L-threonylcarbamoyladenylate + adenosine(37) in tRNA = N(6)-L-threonylcarbamoyladenosine(37) in tRNA + AMP + H(+). Required for the formation of a threonylcarbamoyl group on adenosine at position 37 (t(6)A37) in tRNAs that read codons beginning with adenine. Is involved in the transfer of the threonylcarbamoyl moiety of threonylcarbamoyl-AMP (TC-AMP) to the N6 group of A37, together with TsaE and TsaB. TsaD likely plays a direct catalytic role in this reaction. This chain is tRNA N6-adenosine threonylcarbamoyltransferase, found in Bordetella avium (strain 197N).